The sequence spans 670 residues: DNA ligase (670 aa).

Residues 32–36 (DAEYD), 81–82 (SL), and glutamate 113 contribute to the NAD(+) site. Lysine 115 (N6-AMP-lysine intermediate) is an active-site residue. Positions 136, 173, 290, and 314 each coordinate NAD(+). Cysteine 408, cysteine 411, cysteine 426, and cysteine 432 together coordinate Zn(2+). The BRCT domain occupies 592-670 (ESDSPFAGKT…EAEMIRLLGE (79 aa)).

Belongs to the NAD-dependent DNA ligase family. LigA subfamily. Mg(2+) is required as a cofactor. It depends on Mn(2+) as a cofactor.

It catalyses the reaction NAD(+) + (deoxyribonucleotide)n-3'-hydroxyl + 5'-phospho-(deoxyribonucleotide)m = (deoxyribonucleotide)n+m + AMP + beta-nicotinamide D-nucleotide.. Its function is as follows. DNA ligase that catalyzes the formation of phosphodiester linkages between 5'-phosphoryl and 3'-hydroxyl groups in double-stranded DNA using NAD as a coenzyme and as the energy source for the reaction. It is essential for DNA replication and repair of damaged DNA. The chain is DNA ligase from Yersinia pestis bv. Antiqua (strain Antiqua).